An 864-amino-acid polypeptide reads, in one-letter code: Leukocyte tyrosine kinase receptor (864 aa).

The signal sequence occupies residues 1-16; sequence MGCWGQLLVWFGAAGA. The Extracellular segment spans residues 17–424; it reads ILCSSPGSQE…CMDLHKPPGP (408 aa). Low complexity predominate over residues 30–40; that stretch reads RSSPLPLASPS. Residues 30-64 are disordered; that stretch reads RSSPLPLASPSPRDPKVSAPPSILEPASPLNSPGT. Cystine bridges form between Cys-73/Cys-86 and Cys-168/Cys-179. The segment at 239-297 is disordered; that stretch reads YLRPRDRGRTQASPEKLENRSEAPGSGGRGGAAGGGGGWTSRAPSPQAGRSLQEGAEGG. Residues 241–259 show a composition bias toward basic and acidic residues; that stretch reads RPRDRGRTQASPEKLENRS. N-linked (GlcNAc...) asparagine glycosylation is present at Asn-257. Residues 263–277 are compositionally biased toward gly residues; sequence GSGGRGGAAGGGGGW. The cysteines at positions 300 and 322 are disulfide-linked. N-linked (GlcNAc...) asparagine glycosylation is found at Asn-380 and Asn-412. A helical transmembrane segment spans residues 425 to 449; sequence LVLMVAVVATSTLSLLMVCGVLILV. The Cytoplasmic portion of the chain corresponds to 450–864; that stretch reads KQKKWQGLQE…QNLWNPTYRS (415 aa). Positions 510–786 constitute a Protein kinase domain; the sequence is VTLLRALGHG…LQYCTQDPDV (277 aa). ATP is bound by residues 516 to 524 and Lys-544; that span reads LGHGAFGEV. The active-site Proton acceptor is the Asp-643. Tyr-676 is modified (phosphotyrosine; by autocatalysis). 2 disordered regions span residues 790 to 830 and 842 to 864; these read LLPM…KLKS and SGLK…TYRS. The span at 852–864 shows a compositional bias: polar residues; that stretch reads LQPQNLWNPTYRS.

The protein belongs to the protein kinase superfamily. Tyr protein kinase family. Insulin receptor subfamily. Homodimer; homodimerizes following ligand-binding. Part of a complex including LTK, TNK2 and GRB2, in which GRB2 promotes LTK recruitment by TNK2. Post-translationally, phosphorylated at tyrosine residues by autocatalysis, which activates kinase activity. In terms of tissue distribution, expressed in non-hematopoietic cell lines and T- and B-cell lines.

Its subcellular location is the cell membrane. The enzyme catalyses L-tyrosyl-[protein] + ATP = O-phospho-L-tyrosyl-[protein] + ADP + H(+). Activated by ligand-binding, leading to homodimerization and autophosphorylation. Receptor with a tyrosine-protein kinase activity. Following activation by ALKAL1 or ALKAL2 ligands at the cell surface, transduces an extracellular signal into an intracellular response. Ligand-binding to the extracellular domain induces tyrosine kinase activation, leading to activation of the mitogen-activated protein kinase (MAPK) pathway. Phosphorylates almost exclusively at the first tyrosine of the Y-x-x-x-Y-Y motif. The exact function of this protein is not known; studies with chimeric proteins demonstrate its ability to promote growth and specifically neurite outgrowth, and cell survival. Involved in regulation of the secretory pathway involving endoplasmic reticulum (ER) export sites (ERESs) and ER to Golgi transport. This chain is Leukocyte tyrosine kinase receptor, found in Homo sapiens (Human).